A 973-amino-acid polypeptide reads, in one-letter code: MSSLDKRKTQNRSKKNSYSICLKEKASAELKREELARIIFDGLYEFVGLLDAQGNVLEVNQAALNGAGVTLEEIRGKPFWKARWWQISKESVANQKRLVEAASSGEFVRCDIEILGKSGGREVIAVDFSLLPIRDEQENIVFLLAEGRNITDKKKAEAMLALKNHELEQLVERIRKLDNAKSDFFAKVSHELRTPLSLILGPLETIMEAESGRGSPYWKKFEVIQRNAMTLLKQVNTLLDLAKMDAQQMGLSYRRADLSQLTRVISSNFDGIAQQKSITLDAELPPHLIAEVDCEKYERIILNLLSNAFKFTPDGGLIRCHLSLSQPAHALITVSDSGPGIPQNLRKEIFERFHQLNQEGQQANQGTGLGLSIVKEFVELHHGTISVSDAPGGGALFQVKLPLNAPEGAYVANNAMSRSDNPQTVNPDEYLLPIPTAGSGAELPQFQSDQPRVLIVEDNPDMRCFIRDCLSTDYQVYVAPDGAKALELMCSAPPDLLITDLMMPVMSGDTLVHKVREKNEFAHIPIMVLSAKPDEKLRVKLLSESVQDYLLKPFSAHELRARVSNLISMKIAGDALRKELSDQSNDIALLTHRLIKSRHRLQQSNIALTASEARWKAVYENSAAGIVLTDTENRILNANPAFQRITGYTEKDLAQLSMEQLTPPNERTQMKQRLARLLQSGGAEYSVECSYLCKNGSTIWANASVSLMSPRVDEPQVILQIIDDITEKKQAQETLNQLQQELVQVSRSATMGEFAAYIAHEINQPLSAIMTNANAGTRWIGNEPPNIMEAKEALARIIRDSDRAADIIRMVRSFLKRQGPVLKPIDLKALVADTTLILKAPSQSNGVSLNVIAGDTLPAIMGDAVQIQQLVINLAMNSIEAMSQVGCETRQLALSFSSNASNDALIICVKDTGPGIPEDQIGQLFNAFYTTKKEGLGMGLAICLTIAEVHNGKIWAESPPAGGACFFVSIPVS.

Residues 32–103 (REELARIIFD…NQKRLVEAAS (72 aa)) form the PAS 1 domain. Positions 108-162 (VRCDIEILGKSGGREVIAVDFSLLPIRDEQENIVFLLAEGRNITDKKKAEAMLAL) constitute a PAC 1 domain. The region spanning 187 to 405 (KVSHELRTPL…LFQVKLPLNA (219 aa)) is the Histidine kinase 1 domain. At histidine 190 the chain carries Phosphohistidine; by autocatalysis. Residues 452–567 (RVLIVEDNPD…ELRARVSNLI (116 aa)) enclose the Response regulatory domain. Aspartate 500 is subject to 4-aspartylphosphate. A PAS 2 domain is found at 611-681 (SEARWKAVYE…QRLARLLQSG (71 aa)). The region spanning 685–737 (YSVECSYLCKNGSTIWANASVSLMSPRVDEPQVILQIIDDITEKKQAQETLNQ) is the PAC 2 domain. The Histidine kinase 2 domain maps to 757-973 (YIAHEINQPL…ACFFVSIPVS (217 aa)). Position 760 is a phosphohistidine (histidine 760).

Post-translationally, autophosphorylated. Activation requires a sequential transfer of a phosphate group from a His in the primary transmitter domain, to an Asp in the receiver domain and to a His in the secondary transmitter domain.

It is found in the cytoplasm. It carries out the reaction ATP + protein L-histidine = ADP + protein N-phospho-L-histidine.. Activity is regulated by agonists and antagonists. Binding of agonists such as toluene or benzene to TmoS stimulates autophosphorylation. Toluene causes the most pronounced increase, followed by benzene, chlorobenzene and ethylbenzene. Activity is inhibited by antagonists such as o-xylene, o-chlorotoluene and trimethylbenzene isomers, which bind to TmoS but do not stimulate autophosphorylation. Functionally, member of the two-component regulatory system TmoS/TmoT involved in the regulation of toluene degradation. Probably phosphorylates TmoT via a four-step phosphorelay in response to toluene. Can also be induced by benzene and ethylbenzene. The polypeptide is Sensor histidine kinase TmoS (tmoS) (Ectopseudomonas mendocina (Pseudomonas mendocina)).